The primary structure comprises 443 residues: Xaa-Pro dipeptidase (443 aa).

Aspartate 246, aspartate 257, histidine 339, glutamate 384, and glutamate 423 together coordinate Mn(2+).

This sequence belongs to the peptidase M24B family. Bacterial-type prolidase subfamily. The cofactor is Mn(2+).

It carries out the reaction Xaa-L-Pro dipeptide + H2O = an L-alpha-amino acid + L-proline. Functionally, splits dipeptides with a prolyl residue in the C-terminal position. The chain is Xaa-Pro dipeptidase from Escherichia coli O7:K1 (strain IAI39 / ExPEC).